We begin with the raw amino-acid sequence, 127 residues long: Phosphoribosyl-AMP cyclohydrolase (127 aa).

Mg(2+) is bound at residue D83. C84 is a binding site for Zn(2+). Positions 85 and 87 each coordinate Mg(2+). Zn(2+) is bound by residues C100 and C107.

It belongs to the PRA-CH family. In terms of assembly, homodimer. Mg(2+) is required as a cofactor. It depends on Zn(2+) as a cofactor.

Its subcellular location is the cytoplasm. The enzyme catalyses 1-(5-phospho-beta-D-ribosyl)-5'-AMP + H2O = 1-(5-phospho-beta-D-ribosyl)-5-[(5-phospho-beta-D-ribosylamino)methylideneamino]imidazole-4-carboxamide. It participates in amino-acid biosynthesis; L-histidine biosynthesis; L-histidine from 5-phospho-alpha-D-ribose 1-diphosphate: step 3/9. Catalyzes the hydrolysis of the adenine ring of phosphoribosyl-AMP. The sequence is that of Phosphoribosyl-AMP cyclohydrolase from Methanocaldococcus jannaschii (strain ATCC 43067 / DSM 2661 / JAL-1 / JCM 10045 / NBRC 100440) (Methanococcus jannaschii).